The primary structure comprises 710 residues: Chloride channel protein CLC-e (710 aa).

A run of 12 helical transmembrane segments spans residues 74–94, 122–142, 164–184, 193–213, 222–242, 261–281, 296–316, 340–360, 379–399, 412–432, 451–471, and 472–492; these read ELAIASACLVGVLTGVSVVLF, IGSNWLRVILVPTIGGLVVSI, VKAVLRPFLKTVAACVTLGTG, SVEIGASIAKGVNSLFNKSPQ, GSAAGISSGFNAAVAGCFFAV, TTSMVILSAVTASVVSEIGLG, PGELPLYLLLGALCGLVSLAL, VFPVMGGLSVGIIALVYPEVL, GLSADLLLQLVAVKIAATAWC, SLFIGGAAGMAYGKFIGLALA, GLVGMAATLAGVCQVPLTAVL, and LLFELTQDYRIVLPLLGAVGM. The disordered stretch occupies residues 500-534; the sequence is QSKRQETRETKETRKRKSQEAVQSLTSSDDESSTN. Positions 502-511 are enriched in basic and acidic residues; it reads KRQETRETKE. Residues 520 to 534 are compositionally biased toward polar residues; sequence AVQSLTSSDDESSTN. 2 consecutive CBS domains span residues 565–624 and 640–702; these read MRTR…GNNR and KCKV…ATRM. The chain crosses the membrane as a helical span at residues 667-687; it reads HVAVVSGSIDAPRIHPVGVLD.

Belongs to the chloride channel (TC 2.A.49) family. In terms of assembly, homodimer.

The protein resides in the membrane. It catalyses the reaction 2 chloride(in) + H(+)(out) = 2 chloride(out) + H(+)(in). Voltage-gated thylakoid chloride (Cl) channel/transporter involved in chloride homeostasis after transition from light to dark. Influences chloroplast ultrastructure and subsequent photosynthetic electron transport. During photosynthetic response on transition from dark to low light, involved in a sequential mechanism of adaptation; VCCN1 and CLCe first trigger the activation of photoprotection, which is later down-regulated by KEA3 to a low steady state, while adjusting electron transport. Regulates photosynthesis by a pH-independent mechanism likely involving Cl(-) homeostasis. This chain is Chloride channel protein CLC-e, found in Arabidopsis thaliana (Mouse-ear cress).